We begin with the raw amino-acid sequence, 245 residues long: Pyridoxine 5'-phosphate synthase (245 aa).

A 3-amino-2-oxopropyl phosphate-binding site is contributed by Asn9. Residue 11–12 participates in 1-deoxy-D-xylulose 5-phosphate binding; it reads DH. Arg20 contacts 3-amino-2-oxopropyl phosphate. His45 serves as the catalytic Proton acceptor. 1-deoxy-D-xylulose 5-phosphate is bound by residues Arg47 and His52. Glu72 functions as the Proton acceptor in the catalytic mechanism. Thr102 lines the 1-deoxy-D-xylulose 5-phosphate pocket. Catalysis depends on His193, which acts as the Proton donor. 3-amino-2-oxopropyl phosphate is bound by residues Gly194 and 215–216; that span reads GH.

It belongs to the PNP synthase family. As to quaternary structure, homooctamer; tetramer of dimers.

The protein localises to the cytoplasm. The catalysed reaction is 3-amino-2-oxopropyl phosphate + 1-deoxy-D-xylulose 5-phosphate = pyridoxine 5'-phosphate + phosphate + 2 H2O + H(+). Its pathway is cofactor biosynthesis; pyridoxine 5'-phosphate biosynthesis; pyridoxine 5'-phosphate from D-erythrose 4-phosphate: step 5/5. Catalyzes the complicated ring closure reaction between the two acyclic compounds 1-deoxy-D-xylulose-5-phosphate (DXP) and 3-amino-2-oxopropyl phosphate (1-amino-acetone-3-phosphate or AAP) to form pyridoxine 5'-phosphate (PNP) and inorganic phosphate. The sequence is that of Pyridoxine 5'-phosphate synthase from Shewanella oneidensis (strain ATCC 700550 / JCM 31522 / CIP 106686 / LMG 19005 / NCIMB 14063 / MR-1).